A 105-amino-acid polypeptide reads, in one-letter code: ATP synthase subunit c (105 aa).

2 helical membrane-spanning segments follow: residues 32–52 (SILG…IGMG) and 78–98 (VAMA…IIAI).

This sequence belongs to the ATPase C chain family. F-type ATPases have 2 components, F(1) - the catalytic core - and F(0) - the membrane proton channel. F(1) has five subunits: alpha(3), beta(3), gamma(1), delta(1), epsilon(1). F(0) has three main subunits: a(1), b(2) and c(10-14). The alpha and beta chains form an alternating ring which encloses part of the gamma chain. F(1) is attached to F(0) by a central stalk formed by the gamma and epsilon chains, while a peripheral stalk is formed by the delta and b chains.

It localises to the cell inner membrane. In terms of biological role, f(1)F(0) ATP synthase produces ATP from ADP in the presence of a proton or sodium gradient. F-type ATPases consist of two structural domains, F(1) containing the extramembraneous catalytic core and F(0) containing the membrane proton channel, linked together by a central stalk and a peripheral stalk. During catalysis, ATP synthesis in the catalytic domain of F(1) is coupled via a rotary mechanism of the central stalk subunits to proton translocation. Key component of the F(0) channel; it plays a direct role in translocation across the membrane. A homomeric c-ring of between 10-14 subunits forms the central stalk rotor element with the F(1) delta and epsilon subunits. The polypeptide is ATP synthase subunit c (Helicobacter pylori (strain ATCC 700392 / 26695) (Campylobacter pylori)).